Here is a 65-residue protein sequence, read N- to C-terminus: Large ribosomal subunit protein bL35 (65 aa).

The disordered stretch occupies residues 1-25; that stretch reads MPKLKTKSSAAKRFKKTGKGGFKHR.

It belongs to the bacterial ribosomal protein bL35 family.

This Francisella tularensis subsp. holarctica (strain FTNF002-00 / FTA) protein is Large ribosomal subunit protein bL35.